Reading from the N-terminus, the 113-residue chain is Large ribosomal subunit protein uL22 (113 aa).

The protein belongs to the universal ribosomal protein uL22 family. In terms of assembly, part of the 50S ribosomal subunit.

Functionally, this protein binds specifically to 23S rRNA; its binding is stimulated by other ribosomal proteins, e.g. L4, L17, and L20. It is important during the early stages of 50S assembly. It makes multiple contacts with different domains of the 23S rRNA in the assembled 50S subunit and ribosome. The globular domain of the protein is located near the polypeptide exit tunnel on the outside of the subunit, while an extended beta-hairpin is found that lines the wall of the exit tunnel in the center of the 70S ribosome. The sequence is that of Large ribosomal subunit protein uL22 from Roseiflexus castenholzii (strain DSM 13941 / HLO8).